A 293-amino-acid chain; its full sequence is tRNA pseudouridine synthase A (293 aa).

Aspartate 67 acts as the Nucleophile in catalysis. Position 125 (tyrosine 125) interacts with substrate.

It belongs to the tRNA pseudouridine synthase TruA family. In terms of assembly, homodimer.

The catalysed reaction is uridine(38/39/40) in tRNA = pseudouridine(38/39/40) in tRNA. Functionally, formation of pseudouridine at positions 38, 39 and 40 in the anticodon stem and loop of transfer RNAs. This chain is tRNA pseudouridine synthase A, found in Synechococcus sp. (strain CC9605).